A 583-amino-acid chain; its full sequence is Kelch-like protein 38 (583 aa).

Residues 34–101 (TDVILCTEDK…IYTGSITITM (68 aa)) form the BTB domain. The region spanning 136–237 (CLSMIRLSEI…HPTYLFQFIA (102 aa)) is the BACK domain. Kelch repeat units lie at residues 285–332 (TLVV…CIHS), 333–385 (ILYV…SYLH), 386–433 (FIFA…ANDQ), 435–481 (IYVF…VIED), 482–523 (KIYI…VINN), and 525–575 (LYVT…PLIC).

The polypeptide is Kelch-like protein 38 (klhl38) (Danio rerio (Zebrafish)).